The chain runs to 592 residues: Delta-like protein 3 (592 aa).

The first 32 residues, 1 to 32, serve as a signal peptide directing secretion; it reads MVSLQVSPLSQTLILAFLLPQALPAGVFELQI. Residues 33-490 are Extracellular-facing; sequence HSFGPGPGLG…LRQADPQRFL (458 aa). The DSL domain occupies 174–213; that stretch reads ARCEPPAVGAACARLCRSRSAPSRCGPGLRPCTPFPDECE. EGF-like domains follow at residues 214–247, 272–308, 310–349, 351–387, 389–425, and 427–463; these read APSVCRPGCSPEHGYCEEPDECRCLEGWTGPLCT, GPGPCDGNPCANGGSCSETSGSFECACPRGFYGLRCE, SGVTCADGPCFNGGLCVGGEDPDSAYVCHCPPGFQGSNCE, RVDRCSLQPCQNGGLCLDLGHALRCRCRAGFAGPRCE, DLDDCAGRACANGGTCVEGGGSRRCSCALGFGGRDCR, and RADPCASRPCAHGGRCYAHFSGLVCACAPGYMGVRCE. 18 disulfide bridges follow: C218–C229, C222–C235, C237–C246, C276–C287, C281–C296, C298–C307, C314–C325, C319–C337, C339–C348, C355–C366, C360–C375, C377–C386, C393–C404, C398–C413, C415–C424, C431–C442, C436–C451, and C453–C462. A helical membrane pass occupies residues 491 to 511; sequence LPPALGLLVAAGLAGAALLVI. Residues 512-592 lie on the Cytoplasmic side of the membrane; it reads HVRRRGPGQD…REDWLIQVLF (81 aa). The tract at residues 548-567 is disordered; it reads QDGAGDGPSSSADWNHPEDG.

In terms of assembly, can bind and activate Notch-1 or another Notch receptor. Ubiquitinated by MIB (MIB1 or MIB2), leading to its endocytosis and subsequent degradation. Predominantly expressed in the neuroectoderm and paraxial mesoderm during embryogenesis.

Its subcellular location is the membrane. Inhibits primary neurogenesis. May be required to divert neurons along a specific differentiation pathway. Plays a role in the formation of somite boundaries during segmentation of the paraxial mesoderm. The polypeptide is Delta-like protein 3 (Dll3) (Mus musculus (Mouse)).